Consider the following 211-residue polypeptide: 2,3-bisphosphoglycerate-dependent phosphoglycerate mutase (211 aa).

Residues 9 to 16, 22 to 23, R61, 88 to 91, K99, 115 to 116, and 159 to 160 contribute to the substrate site; these read RHGQSDWN, TG, ERDY, RR, and GN. H10 serves as the catalytic Tele-phosphohistidine intermediate. E88 serves as the catalytic Proton donor/acceptor.

Belongs to the phosphoglycerate mutase family. BPG-dependent PGAM subfamily. Homodimer.

The enzyme catalyses (2R)-2-phosphoglycerate = (2R)-3-phosphoglycerate. The protein operates within carbohydrate degradation; glycolysis; pyruvate from D-glyceraldehyde 3-phosphate: step 3/5. Catalyzes the interconversion of 2-phosphoglycerate and 3-phosphoglycerate. In Allorhizobium ampelinum (strain ATCC BAA-846 / DSM 112012 / S4) (Agrobacterium vitis (strain S4)), this protein is 2,3-bisphosphoglycerate-dependent phosphoglycerate mutase.